The following is a 554-amino-acid chain: DnaJ homolog subfamily C member 1 (554 aa).

The N-terminal stretch at 1 to 47 is a signal peptide; the sequence is MTAPCSQPAQLPGRRQLGLVPFPPPPPRTPLLWLLLLLLAAVAPARG. Residues 48–153 lie on the Lumenal side of the membrane; it reads WESGDLELFD…RRVRKMSNAE (106 aa). Positions 65–129 constitute a J domain; the sequence is NFYQFLGVQQ…ERRQRYDDIL (65 aa). The chain crosses the membrane as a helical span at residues 154-174; sequence LALLLFIILTVGHYAVVWSIY. At 175-554 the chain is on the cytoplasmic side; it reads LEKQLDELLS…LVQKKKQAKS (380 aa). The region spanning 325 to 379 is the SANT 1 domain; sequence KQAPEWTEEDLSQLTRSMVKFPGGTPGRWEKIAHELGRSVTDVTTKAKQLKDSVT. A Phosphoserine modification is found at S381. Residues 392–405 are compositionally biased toward polar residues; the sequence is STVQNSRPIKTATT. The disordered stretch occupies residues 392-500; it reads STVQNSRPIK…RSAEEPWTQN (109 aa). Positions 421–432 are enriched in acidic residues; sequence AAEEEQEGDSGE. S430 is subject to Phosphoserine. A compositionally biased stretch (basic and acidic residues) spans 455–472; it reads AKPEPEEKSRAKRQKDFD. Acidic residues predominate over residues 473 to 482; the sequence is IAEQNESSDE. S479, S480, S484, and S492 each carry phosphoserine. Over residues 483-494 the composition is skewed to basic and acidic residues; that stretch reads ESLRKERARSAE. An SANT 2 domain is found at 492–547; that stretch reads SAEEPWTQNQQKLLELALQQYPRGSSDRWDKIARCVPSKSKEDCIARYKLLVELVQ.

As to quaternary structure, interacts (via J domain) with HSPA5. Interacts (via cytosolic domain) with ribosomes. Interacts (via SANT 2 domain) with SERPINA3; the interaction delays the formation of the covalent inhibitory complex SERPINA3-chymotrypsin, but does not alter the catalytic activity of SERPINA3. Interacts (via SANT 2 domain) with ITIH4 (via C-terminus); the interaction protects ITIH4 against in vitro cleavage by kallikrein.

It is found in the endoplasmic reticulum membrane. Its subcellular location is the nucleus membrane. The protein localises to the microsome membrane. In terms of biological role, may modulate protein synthesis. The sequence is that of DnaJ homolog subfamily C member 1 (DNAJC1) from Homo sapiens (Human).